A 285-amino-acid chain; its full sequence is Energy-coupling factor transporter ATP-binding protein EcfA1 (285 aa).

In terms of domain architecture, ABC transporter spans Val9–Asp246. Position 43-50 (Gly43–Ser50) interacts with ATP.

It belongs to the ABC transporter superfamily. Energy-coupling factor EcfA family. As to quaternary structure, forms a stable energy-coupling factor (ECF) transporter complex composed of 2 membrane-embedded substrate-binding proteins (S component), 2 ATP-binding proteins (A component) and 2 transmembrane proteins (T component).

The protein resides in the cell membrane. ATP-binding (A) component of a common energy-coupling factor (ECF) ABC-transporter complex. Unlike classic ABC transporters this ECF transporter provides the energy necessary to transport a number of different substrates. This is Energy-coupling factor transporter ATP-binding protein EcfA1 from Lactobacillus gasseri (strain ATCC 33323 / DSM 20243 / BCRC 14619 / CIP 102991 / JCM 1131 / KCTC 3163 / NCIMB 11718 / NCTC 13722 / AM63).